A 389-amino-acid chain; its full sequence is 8-amino-7-oxononanoate synthase (389 aa).

Substrate is bound at residue R19. 106–107 (GY) provides a ligand contact to pyridoxal 5'-phosphate. H131 provides a ligand contact to substrate. Residues S178, 203–206 (DDAH), and 234–237 (TLSK) each bind pyridoxal 5'-phosphate. An N6-(pyridoxal phosphate)lysine modification is found at K237. Residue T351 participates in substrate binding.

This sequence belongs to the class-II pyridoxal-phosphate-dependent aminotransferase family. BioF subfamily. As to quaternary structure, homodimer. Requires pyridoxal 5'-phosphate as cofactor.

The enzyme catalyses 6-carboxyhexanoyl-[ACP] + L-alanine + H(+) = (8S)-8-amino-7-oxononanoate + holo-[ACP] + CO2. It functions in the pathway cofactor biosynthesis; biotin biosynthesis. Functionally, catalyzes the decarboxylative condensation of pimeloyl-[acyl-carrier protein] and L-alanine to produce 8-amino-7-oxononanoate (AON), [acyl-carrier protein], and carbon dioxide. Can also use pimeloyl-CoA instead of pimeloyl-ACP as substrate. The polypeptide is 8-amino-7-oxononanoate synthase (bioF) (Lysinibacillus sphaericus (Bacillus sphaericus)).